Consider the following 447-residue polypeptide: UPF0210 protein LEUM_1180 (447 aa).

The protein belongs to the UPF0210 family. Homodimer.

The protein is UPF0210 protein LEUM_1180 of Leuconostoc mesenteroides subsp. mesenteroides (strain ATCC 8293 / DSM 20343 / BCRC 11652 / CCM 1803 / JCM 6124 / NCDO 523 / NBRC 100496 / NCIMB 8023 / NCTC 12954 / NRRL B-1118 / 37Y).